We begin with the raw amino-acid sequence, 534 residues long: Glucans biosynthesis protein D (534 aa).

Residues 1 to 28 (MYRRDFLKSVTAAWVAFGLPNPLGGAFA) constitute a signal peptide (tat-type signal).

Belongs to the OpgD/OpgG family. Predicted to be exported by the Tat system. The position of the signal peptide cleavage has not been experimentally proven.

The protein localises to the periplasm. It participates in glycan metabolism; osmoregulated periplasmic glucan (OPG) biosynthesis. Its function is as follows. Probably involved in the control of the structural glucose backbone of osmoregulated periplasmic glucans (OPGs). In Xylella fastidiosa (strain M23), this protein is Glucans biosynthesis protein D.